The primary structure comprises 420 residues: Dynein axonemal assembly factor 4 (420 aa).

Positions 3–87 (VRVSEFSWQQ…KEPVLWDSLS (85 aa)) constitute a CS domain. Residues 7–103 (EFSWQQTPAT…EMMQRIREKS (97 aa)) form a mediates interaction with ESR1 and STUB1 region. A compositionally biased stretch (basic and acidic residues) spans 164-192 (ECQKKADGQKRVQRKEKPLEGKQAEETKA). Residues 164–212 (ECQKKADGQKRVQRKEKPLEGKQAEETKALKPRGLPRKAPPTRLPTRGR) are disordered. 3 TPR repeats span residues 288-321 (PDWL…NCKI), 322-355 (PLLY…LTPP), and 364-397 (MKAH…DPAN).

In terms of assembly, interacts with ZMYND10. Interacts with ESR1 and ESR2. Interacts with STUB1. Interacts with DNAAF2. Interacts with CCT3, CCT4, CCT5 and CCT8. Interacts with DNAAF6/PIH1D3.

It localises to the nucleus. It is found in the cytoplasm. The protein localises to the dynein axonemal particle. Its subcellular location is the cell projection. The protein resides in the neuron projection. Functionally, involved in neuronal migration during development of the cerebral neocortex. May regulate the stability and proteasomal degradation of the estrogen receptors that play an important role in neuronal differentiation, survival and plasticity. Axonemal dynein assembly factor required for ciliary motility. The polypeptide is Dynein axonemal assembly factor 4 (Mus musculus (Mouse)).